The sequence spans 205 residues: Macrophage immunometabolism regulator (205 aa).

The interval 1–40 is disordered; that stretch reads MEVDINGVNRTNNSVPSTTEGSSPSKPDPEKPRCSSTPCS. Residues 8–25 are compositionally biased toward polar residues; that stretch reads VNRTNNSVPSTTEGSSPS.

It belongs to the UNC119-binding protein family. As to quaternary structure, interacts with unc119 family proteins; interaction preferentially takes place when unc119 proteins are unliganded with myristoylated proteins.

It localises to the cytoplasm. The protein resides in the cell projection. The protein localises to the cilium. Functionally, may play a role in immune regulation through regulation of the macrophage function. May also play a role in trafficking of proteins via its interaction with unc119 family cargo adapters. May play a role in ciliary membrane localization. This is Macrophage immunometabolism regulator (macir) from Xenopus tropicalis (Western clawed frog).